Reading from the N-terminus, the 189-residue chain is Elongation factor P (189 aa).

This sequence belongs to the elongation factor P family.

Its subcellular location is the cytoplasm. Its pathway is protein biosynthesis; polypeptide chain elongation. Involved in peptide bond synthesis. Stimulates efficient translation and peptide-bond synthesis on native or reconstituted 70S ribosomes in vitro. Probably functions indirectly by altering the affinity of the ribosome for aminoacyl-tRNA, thus increasing their reactivity as acceptors for peptidyl transferase. This chain is Elongation factor P, found in Pseudomonas entomophila (strain L48).